Reading from the N-terminus, the 436-residue chain is UDP-N-acetylmuramate--L-alanine ligase (436 aa).

108-114 (GAHGKTS) contacts ATP.

This sequence belongs to the MurCDEF family.

The protein localises to the cytoplasm. It catalyses the reaction UDP-N-acetyl-alpha-D-muramate + L-alanine + ATP = UDP-N-acetyl-alpha-D-muramoyl-L-alanine + ADP + phosphate + H(+). It participates in cell wall biogenesis; peptidoglycan biosynthesis. In terms of biological role, cell wall formation. This chain is UDP-N-acetylmuramate--L-alanine ligase, found in Bacillus cereus (strain B4264).